The sequence spans 502 residues: Probable cytosol aminopeptidase (502 aa).

Mn(2+) is bound by residues Lys269 and Asp274. The active site involves Lys281. Residues Asp292, Asp351, and Glu353 each contribute to the Mn(2+) site. Arg355 is a catalytic residue.

The protein belongs to the peptidase M17 family. The cofactor is Mn(2+).

The protein resides in the cytoplasm. It carries out the reaction Release of an N-terminal amino acid, Xaa-|-Yaa-, in which Xaa is preferably Leu, but may be other amino acids including Pro although not Arg or Lys, and Yaa may be Pro. Amino acid amides and methyl esters are also readily hydrolyzed, but rates on arylamides are exceedingly low.. The enzyme catalyses Release of an N-terminal amino acid, preferentially leucine, but not glutamic or aspartic acids.. In terms of biological role, presumably involved in the processing and regular turnover of intracellular proteins. Catalyzes the removal of unsubstituted N-terminal amino acids from various peptides. This chain is Probable cytosol aminopeptidase, found in Vibrio vulnificus (strain CMCP6).